The chain runs to 268 residues: Glutamate racemase (268 aa).

Substrate is bound by residues 13-14 and 45-46; these read DS and YG. Catalysis depends on C77, which acts as the Proton donor/acceptor. A substrate-binding site is contributed by 78 to 79; sequence NT. C185 serves as the catalytic Proton donor/acceptor. 186–187 serves as a coordination point for substrate; that stretch reads TH.

This sequence belongs to the aspartate/glutamate racemases family.

The enzyme catalyses L-glutamate = D-glutamate. It functions in the pathway cell wall biogenesis; peptidoglycan biosynthesis. Provides the (R)-glutamate required for cell wall biosynthesis. The polypeptide is Glutamate racemase (Vibrio campbellii (strain ATCC BAA-1116)).